A 114-amino-acid polypeptide reads, in one-letter code: Hydrogenase maturation factor HypA (114 aa).

Histidine 2 is a Ni(2+) binding site. Cysteine 73, cysteine 76, cysteine 89, and cysteine 92 together coordinate Zn(2+).

The protein belongs to the HypA/HybF family.

In terms of biological role, involved in the maturation of [NiFe] hydrogenases. Required for nickel insertion into the metal center of the hydrogenase. This chain is Hydrogenase maturation factor HypA, found in Desulfitobacterium hafniense (strain DSM 10664 / DCB-2).